The primary structure comprises 685 residues: UvrABC system protein C (685 aa).

The GIY-YIG domain maps to 15-93 (ALPGVYRYFD…IKTQNPRFNI (79 aa)). Residues 214 to 249 (QELLQAMEARMMAYSGQLAFEQAAEVRNQMQALSRV) form the UVR domain. Positions 365–388 (AQGGDHAPAAQGGDPPPAASSGGH) are enriched in low complexity. The disordered stretch occupies residues 365–391 (AQGGDHAPAAQGGDPPPAASSGGHPLR).

This sequence belongs to the UvrC family. In terms of assembly, interacts with UvrB in an incision complex.

The protein resides in the cytoplasm. Its function is as follows. The UvrABC repair system catalyzes the recognition and processing of DNA lesions. UvrC both incises the 5' and 3' sides of the lesion. The N-terminal half is responsible for the 3' incision and the C-terminal half is responsible for the 5' incision. The chain is UvrABC system protein C from Verminephrobacter eiseniae (strain EF01-2).